A 687-amino-acid polypeptide reads, in one-letter code: Protein white (687 aa).

Residues 1–30 (MGQEDQELLIRGGSKHPSAEHLNNGDSGAA) are disordered. Residues 1 to 419 (MGQEDQELLI…FMQFRAVLWR (419 aa)) are Cytoplasmic-facing. Residues 93 to 341 (NRTRGLFCNE…FSYVGAQCPT (249 aa)) form the ABC transporter domain. 130–137 (GSSGAGKT) provides a ligand contact to ATP. Residues 420–440 (SWLSVLKEPLLVKVRLIQTTM) traverse the membrane as a helical segment. Over 441–460 (VAILIGLIFLGQQLTQVGVM) the chain is Extracellular. Residues 461–481 (NINGAIFLFLTNMTFQNVFAT) form a helical membrane-spanning segment. The Cytoplasmic portion of the chain corresponds to 482 to 497 (INVFTSELPVFMREAR). A helical transmembrane segment spans residues 498 to 518 (SRLYRCDTYFLGKTIAELPLF). Residues 519–531 (LTVPLVFTAIAYP) are Extracellular-facing. Residues 532-552 (MIGLRAGVLHFFNCLALVTLV) form a helical membrane-spanning segment. Residues 553–568 (ANVSTSFGYLISCASS) are Cytoplasmic-facing. Residues 569-589 (STSMALSVGPPVIIPFLLFGG) traverse the membrane as a helical segment. Over 590 to 644 (FFLNSGSVPVYLKWLSYLSWFRYANEGLLINQWADVEPGEISCTSSNTTCPSSGK) the chain is Extracellular. N-linked (GlcNAc...) asparagine glycosylation is present at asparagine 636. Residues 645-665 (VILETLNFSAADLPLDYVGLA) traverse the membrane as a helical segment. Over 666–675 (ILIVSFRVLA) the chain is Cytoplasmic.

The protein belongs to the ABC transporter superfamily. ABCG family. Eye pigment precursor importer (TC 3.A.1.204) subfamily. In terms of assembly, may form a heterodimer with bw/brown. May form a heterodimer with st/scarlet. As to expression, expressed in the head (at protein level). Expressed in the eye, specifically in retina primary pigment cells, in the basement membrane of the base of secondary and tertiary pigment cells, and in retinula cells (at protein level). Expressed in the retina underlying lamina in the epithelial glia that surrounds the array of lamina cartridges (at protein level). Weakly expressed in photoreceptors, specifically in terminals of R1-R6, R7 and R8 (at protein level). Expressed at very low levels in medulla and central brain (at protein level). Expressed in principal cells of the Malpighian tubules.

Its subcellular location is the cytoplasmic vesicle membrane. It carries out the reaction 3',5'-cyclic GMP(in) + ATP + H2O = 3',5'-cyclic GMP(out) + ADP + phosphate + H(+). The catalysed reaction is guanine(out) + ATP + H2O = guanine(in) + ADP + phosphate + H(+). The enzyme catalyses riboflavin(in) + ATP + H2O = riboflavin(out) + ADP + phosphate + H(+). It catalyses the reaction (6S)-5,6,7,8-tetrahydrofolate(out) + ATP + H2O = (6S)-5,6,7,8-tetrahydrofolate(in) + ADP + phosphate + H(+). It carries out the reaction L-tryptophan(out) + ATP + H2O = L-tryptophan(in) + ADP + phosphate + H(+). The catalysed reaction is L-kynurenine(out) + ATP + H2O = L-kynurenine(in) + ADP + phosphate + H(+). The enzyme catalyses xanthine(out) + ATP + H2O = xanthine(in) + ADP + phosphate + H(+). Its function is as follows. ATP-dependent transporter of the ATP-binding cassette (ABC) family which transports various molecules including bioamines, neurotransmitters, metabolic intermediates and second messengers. In the eye, required for the transport of the eye red and brown pigment precursors, guanine and tryptophan, into pigment cell granules. Probably in association with bw/brown, involved in the transport of guanine. Probably in association with st/scarlet involved in the transport of kynurenine and probably tryptophan. Involved in the transport of kynurenine in pupal eyes. May play a role in histamine uptake by the lamina epithelial glia which surrounds photoreceptors R1-R6. In Malpighian tubules, involved in the transport of cGMP, guanine, xanthine, riboflavin, kynurenine and tryptophan. Probably in association with br/brown, involved in aging-induced intestinal stem cell proliferation in the midgut by regulating tetrahydrofolate transport. Probably in association with st/scarlet, plays a role in zinc storage granule biogenesis in Malpighian tubule principal epithelial cells. In Drosophila melanogaster (Fruit fly), this protein is Protein white.